We begin with the raw amino-acid sequence, 206 residues long: Triafestin-1 (206 aa).

A signal peptide spans 1–18 (MKTILAVIFFGILAFAFA). N-linked (GlcNAc...) asparagine glycosylation is present at asparagine 55.

This sequence belongs to the calycin superfamily. Triabin family. In terms of assembly, interacts with host coagulation factor XII (F12) (inactive and activated) (via amino acids 1-77). Interacts with host high molecular weight kininogen (KNG1) (via amino acids 402-532). Salivary gland (at protein level).

The protein resides in the secreted. Zn(2+) modulates binding to host coagulation factor XII (F12) and high molecular weight kininogen (KNG1). Functionally, suppresses activation of the host plasma kallikrein-kinin system, leading to inhibition of the intrinsic coagulation pathway. Blocks host coagulation factor XII (F12) and prekallikrein (KLKB1) reciprocal activation without affecting their amidolytic activities. Blocks binding of host F12 and high molecular weight kininogen (KNG1) to negatively charged surfaces. Attenuates generation of bradykinin by interfering with activation of host kallikrein-kinin system. The sequence is that of Triafestin-1 from Triatoma infestans (Assassin bug).